Here is a 238-residue protein sequence, read N- to C-terminus: Ribonuclease PH (238 aa).

Phosphate is bound by residues arginine 86 and 124–126; that span reads GTR.

This sequence belongs to the RNase PH family. Homohexameric ring arranged as a trimer of dimers.

The enzyme catalyses tRNA(n+1) + phosphate = tRNA(n) + a ribonucleoside 5'-diphosphate. Functionally, phosphorolytic 3'-5' exoribonuclease that plays an important role in tRNA 3'-end maturation. Removes nucleotide residues following the 3'-CCA terminus of tRNAs; can also add nucleotides to the ends of RNA molecules by using nucleoside diphosphates as substrates, but this may not be physiologically important. Probably plays a role in initiation of 16S rRNA degradation (leading to ribosome degradation) during starvation. This is Ribonuclease PH from Geotalea daltonii (strain DSM 22248 / JCM 15807 / FRC-32) (Geobacter daltonii).